The sequence spans 45 residues: Major cold shock protein (45 aa).

In terms of domain architecture, CSD spans 1–45 (EKGFGFISTENGQDVFAHFSAIQTNGFKTLEEGQKVEFDVEEGQR).

As to quaternary structure, homodimer.

The protein localises to the cytoplasm. The protein is Major cold shock protein (cspA) of Streptococcus dysgalactiae.